Consider the following 238-residue polypeptide: Uridylate kinase (238 aa).

Lys12 to Gly15 contacts ATP. A UMP-binding site is contributed by Gly54. Positions 55 and 59 each coordinate ATP. UMP is bound by residues Asp74 and Thr135 to Thr142. Residues Thr162, Tyr168, and Asp171 each coordinate ATP.

The protein belongs to the UMP kinase family. As to quaternary structure, homohexamer.

It is found in the cytoplasm. The enzyme catalyses UMP + ATP = UDP + ADP. It functions in the pathway pyrimidine metabolism; CTP biosynthesis via de novo pathway; UDP from UMP (UMPK route): step 1/1. Inhibited by UTP. In terms of biological role, catalyzes the reversible phosphorylation of UMP to UDP. This is Uridylate kinase from Oleidesulfovibrio alaskensis (strain ATCC BAA-1058 / DSM 17464 / G20) (Desulfovibrio alaskensis).